A 119-amino-acid chain; its full sequence is Methylglyoxal synthase (119 aa).

The MGS-like domain maps to Met1–Phe119. Residues His8, Lys12, Thr34–Thr37, and Ser54–Gly55 each bind substrate. Catalysis depends on Asp60, which acts as the Proton donor/acceptor. His87 contacts substrate.

The protein belongs to the methylglyoxal synthase family.

The catalysed reaction is dihydroxyacetone phosphate = methylglyoxal + phosphate. In terms of biological role, catalyzes the formation of methylglyoxal from dihydroxyacetone phosphate. The chain is Methylglyoxal synthase from Clostridium botulinum (strain Alaska E43 / Type E3).